A 120-amino-acid chain; its full sequence is Large ribosomal subunit protein uL18 (120 aa).

Positions 1 to 22 (MKTTRKESLKRRHRRIRRKVSG) are disordered. Over residues 8–20 (SLKRRHRRIRRKV) the composition is skewed to basic residues.

It belongs to the universal ribosomal protein uL18 family. Part of the 50S ribosomal subunit; part of the 5S rRNA/L5/L18/L25 subcomplex. Contacts the 5S and 23S rRNAs.

Functionally, this is one of the proteins that bind and probably mediate the attachment of the 5S RNA into the large ribosomal subunit, where it forms part of the central protuberance. The sequence is that of Large ribosomal subunit protein uL18 from Crocosphaera subtropica (strain ATCC 51142 / BH68) (Cyanothece sp. (strain ATCC 51142)).